Reading from the N-terminus, the 274-residue chain is Rhamnulose-1-phosphate aldolase (274 aa).

Residue glutamate 117 is part of the active site. Zn(2+)-binding residues include histidine 141, histidine 143, and histidine 212.

The protein belongs to the aldolase class II family. RhaD subfamily. Homotetramer. The cofactor is Zn(2+).

It localises to the cytoplasm. It catalyses the reaction L-rhamnulose 1-phosphate = (S)-lactaldehyde + dihydroxyacetone phosphate. It participates in carbohydrate degradation; L-rhamnose degradation; glycerone phosphate from L-rhamnose: step 3/3. Catalyzes the reversible cleavage of L-rhamnulose-1-phosphate to dihydroxyacetone phosphate (DHAP) and L-lactaldehyde. The sequence is that of Rhamnulose-1-phosphate aldolase from Yersinia pseudotuberculosis serotype I (strain IP32953).